Here is a 407-residue protein sequence, read N- to C-terminus: tRNA (guanine(9)-N1)-methyltransferase (407 aa).

Residues 1–19 are compositionally biased toward basic and acidic residues; sequence MDLDPAHKPSQAEETKEQG. 2 disordered regions span residues 1 to 105 and 220 to 256; these read MDLD…VRKR and ENMIEPLQRSLTEKSPWARDEKDPLPLPDPEPEPRPE. Low complexity predominate over residues 20-32; that stretch reads NEQGQVEQNQAQQ. Positions 91-103 are enriched in basic residues; it reads LKRKDSRIARKVR. The SAM-dependent MTase TRM10-type domain maps to 120-356; it reads ANKQKPPSVN…SVIPKRKGGK (237 aa). S-adenosyl-L-methionine-binding positions include 263–264, G283, 287–291, C295, L309, and 321–323; these read LS, DKNRE, and TVL. D287 acts as the Proton acceptor in catalysis. Residues 353–407 form a disordered region; that stretch reads KGGKLKEQQGASGETQETEEAEAEDPEEENEETKDPDAEASASKQNTPKVEVTSK. Positions 368 to 386 are enriched in acidic residues; the sequence is QETEEAEAEDPEEENEETK. Positions 394-407 are enriched in polar residues; it reads ASKQNTPKVEVTSK.

This sequence belongs to the class IV-like SAM-binding methyltransferase superfamily. TRM10 family. In terms of assembly, monomer.

The protein localises to the cytoplasm. Its subcellular location is the nucleus. It carries out the reaction guanosine(9) in tRNA + S-adenosyl-L-methionine = N(1)-methylguanosine(9) in tRNA + S-adenosyl-L-homocysteine + H(+). S-adenosyl-L-methionine-dependent guanine N(1)-methyltransferase that catalyzes the formation of N(1)-methylguanine at position 9 (m1G9) in cytoplasmic tRNA. This chain is tRNA (guanine(9)-N1)-methyltransferase, found in Gibberella zeae (strain ATCC MYA-4620 / CBS 123657 / FGSC 9075 / NRRL 31084 / PH-1) (Wheat head blight fungus).